The following is a 258-amino-acid chain: MTRYKAQISYDGSAFSGFQRQPNCRTVQEEIERTLKRLNSGNDVIIHGAGRTDAGVHAYGQVIHFDLPQARDVEKLRFGLDTQCPDDIDIVKVEQVSDDFHCRYDKHIKTYEFLVDIGRPKNPMMRNYATHYPYPVIIELMQEAIKDLVGTHDFTGFTASGTSVENKVRTIFDAKIQFEASKNLLIFTFTGNGFLYKQVRNMVGTLLKIGNGRMPISQIKTILQAKNRDLAGPTAAGNGLYLKEIIYEDKECFSNFRK.

Residue Asp53 is the Nucleophile of the active site. Tyr111 contributes to the substrate binding site.

Belongs to the tRNA pseudouridine synthase TruA family. In terms of assembly, homodimer.

The catalysed reaction is uridine(38/39/40) in tRNA = pseudouridine(38/39/40) in tRNA. In terms of biological role, formation of pseudouridine at positions 38, 39 and 40 in the anticodon stem and loop of transfer RNAs. In Streptococcus agalactiae serotype III (strain NEM316), this protein is tRNA pseudouridine synthase A.